The sequence spans 625 residues: Thioredoxin domain-containing protein 6 (625 aa).

Residues 158–302 (KSYTVAIIKP…FFFPNFKISN (145 aa)) are NDK. A disordered region spans residues 594 to 625 (GETPETSASDISRNAAAQGDDPEQDESKEMEE). The segment covering 613–625 (DDPEQDESKEMEE) has biased composition (acidic residues).

The protein belongs to the NDK family. In terms of assembly, monomer and homodimer.

It localises to the cytoplasm. Its subcellular location is the cytoskeleton. It is found in the cilium axoneme. The protein resides in the dynein axonemal particle. Functionally, may be a regulator of microtubule physiology. This Xenopus laevis (African clawed frog) protein is Thioredoxin domain-containing protein 6.